The chain runs to 494 residues: UDP-N-acetylmuramoyl-L-alanyl-D-glutamate--2,6-diaminopimelate ligase (494 aa).

Serine 30 is a binding site for UDP-N-acetyl-alpha-D-muramoyl-L-alanyl-D-glutamate. ATP is bound at residue 110 to 116 (GTNGKTS). Residues 152–153 (TT), serine 179, and arginine 187 contribute to the UDP-N-acetyl-alpha-D-muramoyl-L-alanyl-D-glutamate site. N6-carboxylysine is present on lysine 219. Meso-2,6-diaminopimelate-binding positions include arginine 380, 404–407 (DNPR), glycine 456, and glutamate 460. Residues 404 to 407 (DNPR) carry the Meso-diaminopimelate recognition motif motif.

Belongs to the MurCDEF family. MurE subfamily. Mg(2+) serves as cofactor. In terms of processing, carboxylation is probably crucial for Mg(2+) binding and, consequently, for the gamma-phosphate positioning of ATP.

The protein resides in the cytoplasm. The catalysed reaction is UDP-N-acetyl-alpha-D-muramoyl-L-alanyl-D-glutamate + meso-2,6-diaminopimelate + ATP = UDP-N-acetyl-alpha-D-muramoyl-L-alanyl-gamma-D-glutamyl-meso-2,6-diaminopimelate + ADP + phosphate + H(+). It functions in the pathway cell wall biogenesis; peptidoglycan biosynthesis. Its function is as follows. Catalyzes the addition of meso-diaminopimelic acid to the nucleotide precursor UDP-N-acetylmuramoyl-L-alanyl-D-glutamate (UMAG) in the biosynthesis of bacterial cell-wall peptidoglycan. In Alkaliphilus metalliredigens (strain QYMF), this protein is UDP-N-acetylmuramoyl-L-alanyl-D-glutamate--2,6-diaminopimelate ligase.